Here is a 137-residue protein sequence, read N- to C-terminus: Large ribosomal subunit protein uL16 (137 aa).

Residues 1–14 are compositionally biased toward basic residues; sequence MLQPNRRKFRKEHK. A disordered region spans residues 1 to 22; that stretch reads MLQPNRRKFRKEHKGRNEGLAT.

The protein belongs to the universal ribosomal protein uL16 family. As to quaternary structure, part of the 50S ribosomal subunit.

Functionally, binds 23S rRNA and is also seen to make contacts with the A and possibly P site tRNAs. In Dechloromonas aromatica (strain RCB), this protein is Large ribosomal subunit protein uL16.